The chain runs to 291 residues: MTQDSYLVGLIGSGIGPSLSPALHEREAGRQGLRYHYRLIDIDRLGVGPEAVGGLVRAARDLGFDGLNITHPCKQLVISHLDTLAPQAEALGAVNTVVFEDGRAVGHNTDVTGFAASFARGLPDARLERVVQLGAGGAGAAVAHALLTLGAGHVTVVDALPERAAALAVALNRHFGDGRAAAASPDTLPKLLTDADGIVHATPTGMAAHPGIPLPAELLHPGLWVAEVVYRPLETELLRTARALGCATLDGGGMAVFQAVDAFRLFTGREPDSMRMLADIAELAGTAAVRH.

Shikimate contacts are provided by residues 18 to 20 and Thr70; that span reads SLS. Residue Lys74 is the Proton acceptor of the active site. Shikimate-binding residues include Asn95 and Asp110. Residues 134-138 and Val228 each bind NADP(+); that span reads GAGGA. Tyr230 is a binding site for shikimate. Gly251 is a binding site for NADP(+).

Belongs to the shikimate dehydrogenase family. Homodimer.

It catalyses the reaction shikimate + NADP(+) = 3-dehydroshikimate + NADPH + H(+). It participates in metabolic intermediate biosynthesis; chorismate biosynthesis; chorismate from D-erythrose 4-phosphate and phosphoenolpyruvate: step 4/7. In terms of biological role, involved in the biosynthesis of the chorismate, which leads to the biosynthesis of aromatic amino acids. Catalyzes the reversible NADPH linked reduction of 3-dehydroshikimate (DHSA) to yield shikimate (SA). This Streptomyces avermitilis (strain ATCC 31267 / DSM 46492 / JCM 5070 / NBRC 14893 / NCIMB 12804 / NRRL 8165 / MA-4680) protein is Shikimate dehydrogenase (NADP(+)).